The chain runs to 255 residues: Fe(3+) dicitrate transport ATP-binding protein FecE (255 aa).

The ABC transporter domain occupies 3 to 238 (LRTENLTVSY…GLLRTVFSVE (236 aa)). 35–42 (GPNGCGKS) lines the ATP pocket.

Belongs to the ABC transporter superfamily. In terms of assembly, the complex is composed of two ATP-binding proteins (FecE), two transmembrane proteins (FecC and FecD) and a solute-binding protein (FecB).

The protein resides in the cell inner membrane. It catalyses the reaction iron(III) dicitrate(out) + ATP + H2O = iron(III) dicitrate(in) + ADP + phosphate + H(+). Functionally, part of the ABC transporter complex FecBCDE involved in citrate-dependent Fe(3+) uptake. Binds ATP. Probably responsible for energy coupling to the transport system. This Escherichia coli (strain K12) protein is Fe(3+) dicitrate transport ATP-binding protein FecE.